We begin with the raw amino-acid sequence, 285 residues long: Alpha-acetolactate decarboxylase (285 aa).

The signal sequence occupies residues 1 to 25 (MKKNIITSITSLALVAGLSLTAFAA).

Belongs to the alpha-acetolactate decarboxylase family.

The enzyme catalyses (2S)-2-acetolactate + H(+) = (R)-acetoin + CO2. The protein operates within polyol metabolism; (R,R)-butane-2,3-diol biosynthesis; (R,R)-butane-2,3-diol from pyruvate: step 2/3. Converts acetolactate into acetoin, which can be excreted by the cells. This may be a mechanism for controlling the internal pH of cells in the stationary stage. This chain is Alpha-acetolactate decarboxylase (aldB), found in Brevibacillus brevis (Bacillus brevis).